The following is a 416-amino-acid chain: Chromate transport protein (416 aa).

Positions 1-21 (MSVANEESYRPSKATDATTEA) are disordered. The next 11 membrane-spanning stretches (helical) occupy residues 99–119 (LGGVLAGLGFMLPGFLLMFAL), 128–148 (FVGTALGAAFLGVQAAVIALI), 160–177 (LLDRWLWVIAIVCALAAI), 181–198 (DFWITLPAGGLVYALLVL), 204–224 (ALLVTLAAVALAAAVALWAAP), 237–257 (ASVLLIFASGLKAGLLTFGGA), 283–303 (LALSGVLPAPLIIFATFVGYV), 308–328 (IGAVAMTVGVFLPAFAFSLIF), 341–361 (LHAFLDGVAAGVVGLIGATTI), 371–391 (VPSLTVGMSIFAAGLAFLYAW), and 395–415 (LNVVVVILAAGLAGWLVFPNQ).

The protein belongs to the chromate ion transporter (CHR) (TC 2.A.51) family.

Its subcellular location is the cell inner membrane. Functionally, this protein reduces chromate accumulation and is essential for chromate resistance. The protein is Chromate transport protein of Pseudomonas aeruginosa.